The primary structure comprises 440 residues: Xylose isomerase (440 aa).

Residues H101 and D104 contribute to the active site. Mg(2+) contacts are provided by E232, E268, H271, D296, D307, D309, and D339.

Belongs to the xylose isomerase family. Homotetramer. It depends on Mg(2+) as a cofactor.

The protein resides in the cytoplasm. It carries out the reaction alpha-D-xylose = alpha-D-xylulofuranose. The sequence is that of Xylose isomerase from Salmonella typhi.